Reading from the N-terminus, the 189-residue chain is MELLEERIKKDGVVLPGNVLKVNSFLNHQIDPQLMMTLGQEFARLFKDAGVTRVLTAEASGIAPGIMAAYCLGVPMVFARKKKPSTVTDAVYTAEVFSYTKQVTNTISVEAKFLDANDRILVIDDFLANGEAAKGLISLAEQAGAEVVGVGVVVEKAFQGGHDWLVNHGYHLEALASIKEFADGQVIFN.

Xanthine-binding residues include leucine 20 and asparagine 27. 128 to 132 (ANGEA) lines the 5-phospho-alpha-D-ribose 1-diphosphate pocket. Lysine 156 provides a ligand contact to xanthine.

Belongs to the purine/pyrimidine phosphoribosyltransferase family. Xpt subfamily. As to quaternary structure, homodimer.

It is found in the cytoplasm. The catalysed reaction is XMP + diphosphate = xanthine + 5-phospho-alpha-D-ribose 1-diphosphate. The protein operates within purine metabolism; XMP biosynthesis via salvage pathway; XMP from xanthine: step 1/1. Its function is as follows. Converts the preformed base xanthine, a product of nucleic acid breakdown, to xanthosine 5'-monophosphate (XMP), so it can be reused for RNA or DNA synthesis. The chain is Xanthine phosphoribosyltransferase from Lactobacillus delbrueckii subsp. bulgaricus (strain ATCC 11842 / DSM 20081 / BCRC 10696 / JCM 1002 / NBRC 13953 / NCIMB 11778 / NCTC 12712 / WDCM 00102 / Lb 14).